A 753-amino-acid polypeptide reads, in one-letter code: Fatty acid oxidation complex subunit alpha (753 aa).

The interval 8 to 197 (SVTHPAFTLN…KMGLVDDVVP (190 aa)) is enoyl-CoA hydratase. The interval 313–747 (RAIHRVGVLG…FYPVDANIDE (435 aa)) is 3-hydroxyacyl-CoA dehydrogenase. Positions 593 to 622 (SNPTLHSNSTKNSSPTKNGNSPAKRNSFKW) are disordered. Positions 599-614 (SNSTKNSSPTKNGNSP) are enriched in low complexity.

This sequence in the N-terminal section; belongs to the enoyl-CoA hydratase/isomerase family. In the central section; belongs to the 3-hydroxyacyl-CoA dehydrogenase family. Heterotetramer of two alpha chains (FadJ) and two beta chains (FadI).

It is found in the cytoplasm. The enzyme catalyses a (3S)-3-hydroxyacyl-CoA = a (2E)-enoyl-CoA + H2O. It carries out the reaction a 4-saturated-(3S)-3-hydroxyacyl-CoA = a (3E)-enoyl-CoA + H2O. It catalyses the reaction a (3S)-3-hydroxyacyl-CoA + NAD(+) = a 3-oxoacyl-CoA + NADH + H(+). The catalysed reaction is (3S)-3-hydroxybutanoyl-CoA = (3R)-3-hydroxybutanoyl-CoA. It participates in lipid metabolism; fatty acid beta-oxidation. Catalyzes the formation of a hydroxyacyl-CoA by addition of water on enoyl-CoA. Also exhibits 3-hydroxyacyl-CoA epimerase and 3-hydroxyacyl-CoA dehydrogenase activities. The sequence is that of Fatty acid oxidation complex subunit alpha from Yersinia pseudotuberculosis serotype I (strain IP32953).